Reading from the N-terminus, the 335-residue chain is Antigen-presenting glycoprotein CD1d (335 aa).

Residues 1-19 (MGCLLFLLLWALLQAWGSA) form the signal peptide. Over 20–301 (EVPQRLFPLR…VLYWGGSYTS (282 aa)) the chain is Extracellular. N-linked (GlcNAc...) asparagine glycosylation is found at asparagine 38 and asparagine 60. Aspartate 98 serves as a coordination point for a D-galactosylceramide. Disulfide bonds link cysteine 120-cysteine 184 and cysteine 224-cysteine 279. A glycan (N-linked (GlcNAc...) asparagine) is linked at asparagine 126. 169–172 (DKWT) is a binding site for a D-galactosylceramide. A glycan (N-linked (GlcNAc...) asparagine) is linked at asparagine 181. The 108-residue stretch at 185 to 292 (PQFVSGLLES…HSSLEGQDIV (108 aa)) folds into the Ig-like domain. The helical transmembrane segment at 302-322 (MGLIALAVLACLLFLLIVGFT) threads the bilayer. At 323–335 (SRFKRQTSYQGVL) the chain is on the cytoplasmic side. Positions 331–334 (YQGV) match the Internalization signal motif.

In terms of assembly, heterodimer with B2M (beta-2-microglobulin). Interacts with MHC II. As to expression, expressed on cortical thymocytes, on certain T-cell leukemias, and in various other tissues.

Its subcellular location is the cell membrane. The protein resides in the basolateral cell membrane. It localises to the endosome membrane. The protein localises to the lysosome membrane. It is found in the endoplasmic reticulum membrane. Its function is as follows. Antigen-presenting protein that binds self and non-self glycolipids and presents them to T-cell receptors on natural killer T-cells. In Homo sapiens (Human), this protein is Antigen-presenting glycoprotein CD1d (CD1D).